A 323-amino-acid polypeptide reads, in one-letter code: MKKEELRLIFMGTADFAVPALRALVENGYQVKAVVTMPDKPMGRGHKVSPSMVKLYAQELGLPILQPDNLNEESFLDELRTYQPHLQIVVAFRMLPRSVWQMPPMGTINLHGSLLPMYRGAAPINHAIRHGDTETGVTTFRLRHEIDTGEVLLQEKLPIGHEETFGELYERMATLGASVLVHTVDLFLEGEPVSIPQEQLPGYVGARPAPKIFKDDCRIDWDKPAEEVHNFIRSISPAPTAWTKLHRPGMESIVLKIYRTQVIEREPRHRGRFGSIIWDKKNLDVMTRKGVIRILSLQMPGKKQMDAASFLNGFALSSDMYIE.

Serine 113–proline 116 contributes to the (6S)-5,6,7,8-tetrahydrofolate binding site.

It belongs to the Fmt family.

It carries out the reaction L-methionyl-tRNA(fMet) + (6R)-10-formyltetrahydrofolate = N-formyl-L-methionyl-tRNA(fMet) + (6S)-5,6,7,8-tetrahydrofolate + H(+). In terms of biological role, attaches a formyl group to the free amino group of methionyl-tRNA(fMet). The formyl group appears to play a dual role in the initiator identity of N-formylmethionyl-tRNA by promoting its recognition by IF2 and preventing the misappropriation of this tRNA by the elongation apparatus. The sequence is that of Methionyl-tRNA formyltransferase from Porphyromonas gingivalis (strain ATCC 33277 / DSM 20709 / CIP 103683 / JCM 12257 / NCTC 11834 / 2561).